The sequence spans 334 residues: Ficolin-1 (334 aa).

The N-terminal stretch at 1–17 (MQWPTLWAFSGLLCLCP) is a signal peptide. The interval 47–117 (SCPGFPGPPG…SLGEKELGDT (71 aa)) is disordered. Residues 50–88 (GFPGPPGPKGEPGSPAGRGERGFQGSPGKMGPAGSKGEP) form the Collagen-like domain. A Fibrinogen C-terminal domain is found at 117–334 (TLCQRGPRSC…KVAEMKIRAS (218 aa)). 2 disulfide bridges follow: cysteine 119–cysteine 147 and cysteine 126–cysteine 154. Positions 123–162 (PRSCKDLLTRGIFLTGWYTIHLPDCRPLTVLCDMDVDGGG) are a domain; contributes to trimerization. Positions 163-251 (WTVFQRRVDG…LTLGQFLEGT (89 aa)) are b domain; contributes to trimerization. Asparagine 261 carries N-linked (GlcNAc...) asparagine glycosylation. Ca(2+)-binding residues include aspartate 270 and aspartate 272. A disulfide bridge connects residues cysteine 278 and cysteine 291. 290–292 (NCH) contacts a carbohydrate. Residues 325–334 (KVAEMKIRAS) form a p domain region.

Belongs to the ficolin lectin family. As to quaternary structure, homotrimer. Interacts with elastin/ELN. Interacts (via Fibrinogen C-terminal domain) with FFAR2. Interacts with CRP; may regulate monocyte activation by FCN1. As to expression, highly expressed in liver and spleen.

Its subcellular location is the secreted. It localises to the cell membrane. Its function is as follows. Extracellular lectin functioning as a pattern-recognition receptor in innate immunity. Binds the sugar moieties of pathogen-associated molecular patterns (PAMPs) displayed on microbes and activates the lectin pathway of the complement system. May also activate monocytes through a G protein-coupled receptor, FFAR2, inducing the secretion of interleukin-8/IL-8. Binds preferentially to 9-O-acetylated 2-6-linked sialic acid derivatives and to various glycans containing sialic acid engaged in a 2-3 linkage. The chain is Ficolin-1 (Fcn1) from Mus musculus (Mouse).